A 483-amino-acid polypeptide reads, in one-letter code: UDP-N-acetylmuramoyl-L-alanyl-D-glutamate--2,6-diaminopimelate ligase (483 aa).

S30 lines the UDP-N-acetyl-alpha-D-muramoyl-L-alanyl-D-glutamate pocket. An ATP-binding site is contributed by 109-115 (GTNGKTT). Residues 151 to 152 (TT), S178, and R186 each bind UDP-N-acetyl-alpha-D-muramoyl-L-alanyl-D-glutamate. Position 218 is an N6-carboxylysine (K218). Residues R380, 403 to 406 (DNPR), G453, and E457 contribute to the meso-2,6-diaminopimelate site. The Meso-diaminopimelate recognition motif motif lies at 403 to 406 (DNPR).

It belongs to the MurCDEF family. MurE subfamily. Mg(2+) serves as cofactor. Carboxylation is probably crucial for Mg(2+) binding and, consequently, for the gamma-phosphate positioning of ATP.

The protein resides in the cytoplasm. It carries out the reaction UDP-N-acetyl-alpha-D-muramoyl-L-alanyl-D-glutamate + meso-2,6-diaminopimelate + ATP = UDP-N-acetyl-alpha-D-muramoyl-L-alanyl-gamma-D-glutamyl-meso-2,6-diaminopimelate + ADP + phosphate + H(+). Its pathway is cell wall biogenesis; peptidoglycan biosynthesis. In terms of biological role, catalyzes the addition of meso-diaminopimelic acid to the nucleotide precursor UDP-N-acetylmuramoyl-L-alanyl-D-glutamate (UMAG) in the biosynthesis of bacterial cell-wall peptidoglycan. The protein is UDP-N-acetylmuramoyl-L-alanyl-D-glutamate--2,6-diaminopimelate ligase of Chlamydia pneumoniae (Chlamydophila pneumoniae).